Consider the following 248-residue polypeptide: Triosephosphate isomerase (248 aa).

Substrate contacts are provided by N12 and K14. An N6-acetyllysine modification is found at K14. Y68 is modified (3'-nitrotyrosine). H96 serves as the catalytic Electrophile. S106 is modified (phosphoserine). Residue K142 forms a Glycyl lysine isopeptide (Lys-Gly) (interchain with G-Cter in SUMO1) linkage. Position 149 is an N6-succinyllysine (K149). K156 is subject to N6-acetyllysine; alternate. K156 carries the N6-succinyllysine; alternate modification. E166 serves as the catalytic Proton acceptor. T173 carries the phosphothreonine modification. N6-acetyllysine; alternate is present on K194. Position 194 is an N6-succinyllysine; alternate (K194). Position 194 is an N6-methyllysine; alternate (K194). The residue at position 209 (Y209) is a 3'-nitrotyrosine. Position 212 is a phosphoserine (S212). Position 214 is a phosphothreonine (T214). A Phosphoserine modification is found at S223. At K238 the chain carries N6-acetyllysine.

It belongs to the triosephosphate isomerase family. As to quaternary structure, homodimer.

It localises to the cytoplasm. The catalysed reaction is dihydroxyacetone phosphate = methylglyoxal + phosphate. It carries out the reaction D-glyceraldehyde 3-phosphate = dihydroxyacetone phosphate. It participates in carbohydrate degradation; glycolysis; D-glyceraldehyde 3-phosphate from glycerone phosphate: step 1/1. The protein operates within carbohydrate biosynthesis; gluconeogenesis. Triosephosphate isomerase is an extremely efficient metabolic enzyme that catalyzes the interconversion between dihydroxyacetone phosphate (DHAP) and D-glyceraldehyde-3-phosphate (G3P) in glycolysis and gluconeogenesis. In terms of biological role, it is also responsible for the non-negligible production of methylglyoxal a reactive cytotoxic side-product that modifies and can alter proteins, DNA and lipids. The polypeptide is Triosephosphate isomerase (TPI1) (Sus scrofa (Pig)).